A 185-amino-acid chain; its full sequence is MIVLGIDPGSRRCGYGVVAREGARLTVVESGVLVPGDLPMAQRLGRILDGLDALIARARPAEASVEAVFSGASPRSALVLGQARGVALAAAARAGLPVFEYAPSEVKLAFTGNGRAGKDQMLRTARMLLGAAPGLSDEADALAIAVCHLARRAFAVPAAGAGRAAAARAAAARLRPSRRDHRGTP.

Catalysis depends on residues Asp7, Glu66, and Asp137. Residues Asp7, Glu66, and Asp137 each contribute to the Mg(2+) site.

Belongs to the RuvC family. As to quaternary structure, homodimer which binds Holliday junction (HJ) DNA. The HJ becomes 2-fold symmetrical on binding to RuvC with unstacked arms; it has a different conformation from HJ DNA in complex with RuvA. In the full resolvosome a probable DNA-RuvA(4)-RuvB(12)-RuvC(2) complex forms which resolves the HJ. It depends on Mg(2+) as a cofactor.

The protein resides in the cytoplasm. The catalysed reaction is Endonucleolytic cleavage at a junction such as a reciprocal single-stranded crossover between two homologous DNA duplexes (Holliday junction).. Its function is as follows. The RuvA-RuvB-RuvC complex processes Holliday junction (HJ) DNA during genetic recombination and DNA repair. Endonuclease that resolves HJ intermediates. Cleaves cruciform DNA by making single-stranded nicks across the HJ at symmetrical positions within the homologous arms, yielding a 5'-phosphate and a 3'-hydroxyl group; requires a central core of homology in the junction. The consensus cleavage sequence is 5'-(A/T)TT(C/G)-3'. Cleavage occurs on the 3'-side of the TT dinucleotide at the point of strand exchange. HJ branch migration catalyzed by RuvA-RuvB allows RuvC to scan DNA until it finds its consensus sequence, where it cleaves and resolves the cruciform DNA. The sequence is that of Crossover junction endodeoxyribonuclease RuvC from Anaeromyxobacter dehalogenans (strain 2CP-C).